The chain runs to 260 residues: Membrane protein insertase YidC 1 (260 aa).

Positions 1-22 (MLKSYRAVLVSLSLLFVFVLSG) are cleaved as a signal peptide. Residue cysteine 23 is the site of N-palmitoyl cysteine attachment. Cysteine 23 carries S-diacylglycerol cysteine lipidation. 5 consecutive transmembrane segments (helical) span residues 29–49 (IDAH…SFMI), 52–72 (VAHH…TLVI), 133–153 (LAGC…YYAI), 164–184 (FLWV…IAAL), and 213–233 (MPAM…LYWI).

The protein belongs to the OXA1/ALB3/YidC family. Type 2 subfamily.

The protein localises to the cell membrane. In terms of biological role, required for the insertion and/or proper folding and/or complex formation of integral membrane proteins into the membrane. Involved in integration of membrane proteins that insert both dependently and independently of the Sec translocase complex, as well as at least some lipoproteins. The sequence is that of Membrane protein insertase YidC 1 from Bacillus cereus (strain ATCC 14579 / DSM 31 / CCUG 7414 / JCM 2152 / NBRC 15305 / NCIMB 9373 / NCTC 2599 / NRRL B-3711).